Here is a 182-residue protein sequence, read N- to C-terminus: UPF0397 protein VS_II0189 (182 aa).

A run of 5 helical transmembrane segments spans residues Val-8–Val-28, Ala-41–Ile-61, Trp-72–Phe-92, Phe-110–Phe-130, and Gln-146–Leu-166.

The protein belongs to the UPF0397 family.

It localises to the cell membrane. In Vibrio atlanticus (strain LGP32) (Vibrio splendidus (strain Mel32)), this protein is UPF0397 protein VS_II0189.